Consider the following 818-residue polypeptide: IQ and AAA domain-containing protein 1-like (818 aa).

An IQ domain is found at 206 to 235 (QGQAAVTIQKVWKGYLQRKRTQQDRRMEME). Disordered stretches follow at residues 344–377 (QMQENRKKEQEKSKEKGKDEKEKKKGKEEKAKKG) and 458–482 (EERPLRAPKKTPGKKTGKKKEKDLT). Residues 463-476 (RAPKKTPGKKTGKK) show a composition bias toward basic residues. Residue 567 to 574 (GPSGMGKK) participates in ATP binding. The interval 795–818 (SMKHRMDQLEAEEAKLDKEKKKRK) is disordered. Residues 798–818 (HRMDQLEAEEAKLDKEKKKRK) are compositionally biased toward basic and acidic residues.

This sequence belongs to the AAA ATPase family.

In Homo sapiens (Human), this protein is IQ and AAA domain-containing protein 1-like (IQCA1L).